A 414-amino-acid polypeptide reads, in one-letter code: 2,3-diketo-5-methylthiopentyl-1-phosphate enolase (414 aa).

The active-site Proton acceptor is the Lys-99. Substrate contacts are provided by residues Lys-148, 174-177 (KDDE), His-265, Gly-338, and 360-361 (GG). Mg(2+) is bound by residues Lys-174, Asp-176, and Glu-177. An N6-carboxylysine modification is found at Lys-174.

The protein belongs to the RuBisCO large chain family. Type IV subfamily. As to quaternary structure, homodimer. The cofactor is Mg(2+).

It carries out the reaction 5-methylsulfanyl-2,3-dioxopentyl phosphate = 2-hydroxy-5-methylsulfanyl-3-oxopent-1-enyl phosphate. It participates in amino-acid biosynthesis; L-methionine biosynthesis via salvage pathway; L-methionine from S-methyl-5-thio-alpha-D-ribose 1-phosphate: step 3/6. Functionally, catalyzes the enolization of 2,3-diketo-5-methylthiopentyl-1-phosphate (DK-MTP-1-P) into 2-hydroxy-3-keto-5-methylthiopentenyl-1-phosphate (HK-MTPenyl-1-P). The sequence is that of 2,3-diketo-5-methylthiopentyl-1-phosphate enolase from Bacillus cytotoxicus (strain DSM 22905 / CIP 110041 / 391-98 / NVH 391-98).